We begin with the raw amino-acid sequence, 355 residues long: tRNA (guanine-N(1)-)-methyltransferase (355 aa).

S-adenosyl-L-methionine-binding positions include glycine 109 and 129 to 134; that span reads IGDYVL.

This sequence belongs to the RNA methyltransferase TrmD family. As to quaternary structure, homodimer.

The protein localises to the cytoplasm. The catalysed reaction is guanosine(37) in tRNA + S-adenosyl-L-methionine = N(1)-methylguanosine(37) in tRNA + S-adenosyl-L-homocysteine + H(+). Its function is as follows. Specifically methylates guanosine-37 in various tRNAs. This is tRNA (guanine-N(1)-)-methyltransferase from Chlamydia abortus (strain DSM 27085 / S26/3) (Chlamydophila abortus).